The chain runs to 354 residues: Protein RecA (354 aa).

Residue 67 to 74 (GPESSGKT) participates in ATP binding.

The protein belongs to the RecA family.

The protein resides in the cytoplasm. Can catalyze the hydrolysis of ATP in the presence of single-stranded DNA, the ATP-dependent uptake of single-stranded DNA by duplex DNA, and the ATP-dependent hybridization of homologous single-stranded DNAs. It interacts with LexA causing its activation and leading to its autocatalytic cleavage. The sequence is that of Protein RecA from Enterobacter agglomerans (Erwinia herbicola).